The chain runs to 126 residues: Fluoride-specific ion channel FluC (126 aa).

4 helical membrane passes run 4 to 24 (PLLSIALGSVLGAWLRWLLGL), 33 to 53 (IPLGTVTVNLAGGFIIGFAMA), 67 to 87 (FVITGFCGALTTFSTFSIEIV), and 97 to 117 (MAMLAISIHLIGSLIFTCLGL). 2 residues coordinate Na(+): Gly-74 and Thr-77.

Belongs to the fluoride channel Fluc/FEX (TC 1.A.43) family.

The protein resides in the cell inner membrane. The catalysed reaction is fluoride(in) = fluoride(out). Na(+) is not transported, but it plays an essential structural role and its presence is essential for fluoride channel function. Functionally, fluoride-specific ion channel. Important for reducing fluoride concentration in the cell, thus reducing its toxicity. The protein is Fluoride-specific ion channel FluC of Acinetobacter baumannii (strain ACICU).